The chain runs to 172 residues: MERAIQGNDAREQANSERWDGGSGSSTSPFQLPDESPSWTEWRLHNDETNSNQDNPLGFKESWGFGKVVFKRYLRYERTETSLHRVLGSWTGDSVNYAASRFFGVNQIGCTYSIRFRGVSVTISGGSRTLQHLCEMAIRSKQELLQLTPVEVESNVSRGCPEGVETFEEESE.

Basic and acidic residues predominate over residues 1 to 20; sequence MERAIQGNDAREQANSERWD. The interval 1–38 is disordered; it reads MERAIQGNDAREQANSERWDGGSGSSTSPFQLPDESPS.

It belongs to the tombusvirus protein p19 family. Homodimer.

Viral suppressor of RNA silencing which binds specifically to silencing RNAs (siRNAs). Acts as a molecular caliper to specifically select siRNAs based on the length of the duplex region of the RNA. The polypeptide is RNA silencing suppressor p19 (Tomato bushy stunt virus (strain type) (TBSV)).